Reading from the N-terminus, the 259-residue chain is Putative carbamate hydrolase RutD (259 aa).

This sequence belongs to the AB hydrolase superfamily. Hydrolase RutD family.

It catalyses the reaction carbamate + 2 H(+) = NH4(+) + CO2. Functionally, involved in pyrimidine catabolism. May facilitate the hydrolysis of carbamate, a reaction that can also occur spontaneously. The chain is Putative carbamate hydrolase RutD from Pseudomonas syringae pv. syringae (strain B728a).